We begin with the raw amino-acid sequence, 1149 residues long: MDFGSIAAKMTLDISNFTSQLNLAQSQAQRLALESSKSFQIGSALTGLGKGLTTAVTLPLMGFAAASIKVGNEFQAQMSRVQAIAGATAEELGRMKTQAIDLGAKTAFSAKEAAQGMENLASAGFQVNEIMDAMPGVLDLAAVSGGDVAASSEAMASSLRAFGLEANQAGHVADVFARAAADTNAETSDMAEAMKYVAPVAHSMGLSLEETAASIGIMADAGIKGSQAGTTLRGALSRIAKPTKAMVKSMQELGVSFYDANGNMIPLREQIAQLKTATAGLTQEERNRHLVTLYGQNSLSGMLALLDAGPEKLDKMTNALVNSDGAAKEMAETMQDNLASKIEQMGGAFESVAIIVQQILEPALAKIVGAITKVLEAFVNMSPIGQKMVVIFAGMVAALGPLLLIAGMVMTTIVKLRIAIQFLGPAFMGTMGTIAGVIAIFYALVAVFMIAYTKSERFRNFINSLAPAIKAGFGGALEWLLPRLKELGEWLQKAGEKAKEFGQSVGSKVSKLLEQFGISIGQAGGSIGQFIGNVLERLGGAFGKVGGVISIAVSLVTKFGLAFLGITGPLGIAISLLVSFLTAWARTGEFNADGITQVFENLTNTIQSTADFISQYLPVFVEKGTQILVKIIEGIASAVPQVVEVISQVIENIVMTISTVMPQLVEAGIKILEALINGLVQSLPTIIQAAVQIITALFNGLVQALPTLIQAGLQILSALINGLVQALPAIIQAAVQIIMSLVQALIENLPMIIEAAMQIIMGLVNALIENIGPILEAGIQILMALIEGLIQVLPELITAAIQIITSLLEAILSNLPQLLEAGVKLLLSLLQGLLNMLPQLIAGALQIMMALLKAVIDFVPKLLQAGVQLLKALIQGIASLLGSLLSTAGNMLSSLVSKIASFVGQMVSGGANLIRNFISGIGSMIGSAVSKIGSMGTSIVSKVTGFAGQMVSAGVNLVRGFINGISSMVSSAVSAAANMASSALNAVKGFLGIHSPSRVMEQMGIYTGQGFVNGIGNMIRTTRDKAKEMAETVTEALSDVKMDIQENGVIEKVKSVYEKMADQLPETLPAPDFEDVRKAAGSPRVDLFNTGSDNPNQPQSQSKNNQGEQTVVNIGTIVVRNNDDVDKLSRGLYNRSKETLSGFGNIVTP.

8 consecutive transmembrane segments (helical) span residues 389–409 (VVIF…AGMV), 431–451 (MGTI…FMIA), 561–581 (LAFL…VSFL), 689–709 (AAVQ…PTLI), 726–746 (ALPA…QALI), 781–801 (ILMA…TAAI), 840–860 (LIAG…DFVP), and 865–885 (AGVQ…GSLL). A disordered region spans residues 1084 to 1109 (RVDLFNTGSDNPNQPQSQSKNNQGEQ). Over residues 1094-1106 (NPNQPQSQSKNNQ) the composition is skewed to low complexity.

The protein localises to the host membrane. It is found in the virion. Functionally, plays a role in virion tail formation. The length of the tape measure protein is proportional to the length of the phage's tail. This chain is Tape measure protein (TMP), found in Streptococcus pneumoniae (Bacteriophage Dp-1).